Consider the following 245-residue polypeptide: Zinc finger protein AZF1 (245 aa).

A compositionally biased stretch (polar residues) spans 1–15; it reads MALETLNSPTATTTA. Disordered regions lie at residues 1 to 57 and 112 to 141; these read MALE…NKNL and LGGH…SHSN. The segment at 97–119 adopts a C2H2-type 1 zinc-finger fold; that stretch reads YKCTVCGKSFSSYQALGGHKTSH. Residues 123–134 show a composition bias toward polar residues; that stretch reads TNTSITSGNQEL. The C2H2-type 2 zinc finger occupies 164–186; the sequence is HTCSICFKSFASGQALGGHKRCH. The tract at residues 193-231 is disordered; sequence GNGNGSSSNSVELVAGSDVSDVDNERWSEESAIGGHRGF.

As to expression, highly expressed in roots and at lower levels in leaves and stems.

The protein resides in the nucleus. Its function is as follows. Transcriptional repressor involved in the inhibition of plant growth under abiotic stress conditions. Can repress the expression of various genes, including osmotic stress and abscisic acid-repressive genes and auxin-inducible genes, by binding to their promoter regions in a DNA sequence-specific manner. The sequence is that of Zinc finger protein AZF1 (AZF1) from Arabidopsis thaliana (Mouse-ear cress).